The chain runs to 1191 residues: Protogenin (1191 aa).

The N-terminal stretch at 1 to 23 (MAPPVRPGMLPLLLLLLLPPLGS) is a signal peptide. Ig-like domains follow at residues 24–124 (VPGV…AHLT), 126–216 (STIS…ASLT), 229–316 (PTII…ATLT), and 321–405 (PSFV…ARLT). Over 24-943 (VPGVWSFSEL…YYHLDQKSMT (920 aa)) the chain is Extracellular. 2 cysteine pairs are disulfide-bonded: Cys54–Cys107 and Cys150–Cys199. Asn237 carries an N-linked (GlcNAc...) asparagine glycan. Cystine bridges form between Cys250-Cys298 and Cys342-Cys389. 5 Fibronectin type-III domains span residues 415–509 (APYN…TLED), 511–607 (PLRP…TPKA), 612–711 (APKS…VRDR), 718–811 (PPHH…TLPE), and 816–911 (PPVG…VLPK). Asn624 carries an N-linked (GlcNAc...) asparagine glycan. Residues 944-964 (GIAVGVGIALTCILICVLILI) traverse the membrane as a helical segment. Topologically, residues 965-1191 (YRSKARKSSA…LRYAAEGFPV (227 aa)) are cytoplasmic. Disordered regions lie at residues 975–1010 (SKTA…ETAE) and 1079–1191 (ISDE…GFPV). Residues 977–990 (TAQSGTQPLSQASA) are compositionally biased toward polar residues. Over residues 1104 to 1132 (DTEHSANSEGSHETGDSGRFSHESNDEIH) the composition is skewed to basic and acidic residues. 2 stretches are compositionally biased toward polar residues: residues 1135–1146 (SVISSTPPTSNP) and 1171–1180 (EQTSAPQTSA).

It belongs to the immunoglobulin superfamily. DCC family. In terms of tissue distribution, from mid-gastrulation to early somite stages, restricted to posterior neural plate and mesoderm with an anterior limit at the level of the rhombencephalon. Posterior restriction is progressively lost during somitogenesis. Expression is maintained in the neural tube and paraxial mesoderm during this process. As development proceeds, further restricted to the dorsal parts of the spinal cord and somites. In parallel, expression progresses caudally during axis elongation.

It is found in the membrane. May play a role in anteroposterior axis elongation. The polypeptide is Protogenin (Mus musculus (Mouse)).